We begin with the raw amino-acid sequence, 123 residues long: MKVFIILGAINALLAVGLGAFGAHGLEGKIPDKYLQVWHTGVQYHMYHALGLFVVAFLADKLSGIGSVTTAGWLMFAGIVLFSGSLYILSVTQISILGAITPLGGVAFIISWIMIVVAAVKYL.

A run of 4 helical transmembrane segments spans residues 3–23 (VFII…AFGA), 49–69 (ALGL…GSVT), 71–91 (AGWL…ILSV), and 96–116 (ILGA…IMIV).

It belongs to the UPF0382 family.

It is found in the cell membrane. The sequence is that of UPF0382 membrane protein YwdK (ywdK) from Bacillus subtilis (strain 168).